A 298-amino-acid polypeptide reads, in one-letter code: Aspartate carbamoyltransferase catalytic subunit (298 aa).

Residues Arg-50 and Thr-51 each contribute to the carbamoyl phosphate site. Lys-79 is a binding site for L-aspartate. Carbamoyl phosphate contacts are provided by Arg-100, His-128, and Gln-131. Positions 161 and 220 each coordinate L-aspartate. Positions 259 and 260 each coordinate carbamoyl phosphate.

It belongs to the aspartate/ornithine carbamoyltransferase superfamily. ATCase family. As to quaternary structure, heterooligomer of catalytic and regulatory chains.

The catalysed reaction is carbamoyl phosphate + L-aspartate = N-carbamoyl-L-aspartate + phosphate + H(+). Its pathway is pyrimidine metabolism; UMP biosynthesis via de novo pathway; (S)-dihydroorotate from bicarbonate: step 2/3. In terms of biological role, catalyzes the condensation of carbamoyl phosphate and aspartate to form carbamoyl aspartate and inorganic phosphate, the committed step in the de novo pyrimidine nucleotide biosynthesis pathway. In Sulfurisphaera tokodaii (strain DSM 16993 / JCM 10545 / NBRC 100140 / 7) (Sulfolobus tokodaii), this protein is Aspartate carbamoyltransferase catalytic subunit.